Reading from the N-terminus, the 139-residue chain is MTDEATALIAQYWATGLFIIAVFALCALMIGAASLLGGRSRGPSKSLPFESGVVGTGSARQRFSVKFYLVAMLFVIFDIEAVFLFAWAVSVREVGWEGFAGAAVFIFILLAGLVYDSRVGALEWAPRKRGRSPDIVTQR.

The next 3 helical transmembrane spans lie at 16-36 (GLFI…ASLL), 69-89 (LVAM…AWAV), and 94-114 (VGWE…AGLV).

This sequence belongs to the complex I subunit 3 family. As to quaternary structure, NDH-1 is composed of 14 different subunits. Subunits NuoA, H, J, K, L, M, N constitute the membrane sector of the complex.

It is found in the cell inner membrane. It carries out the reaction a quinone + NADH + 5 H(+)(in) = a quinol + NAD(+) + 4 H(+)(out). In terms of biological role, NDH-1 shuttles electrons from NADH, via FMN and iron-sulfur (Fe-S) centers, to quinones in the respiratory chain. The immediate electron acceptor for the enzyme in this species is believed to be ubiquinone. Couples the redox reaction to proton translocation (for every two electrons transferred, four hydrogen ions are translocated across the cytoplasmic membrane), and thus conserves the redox energy in a proton gradient. This Chromohalobacter salexigens (strain ATCC BAA-138 / DSM 3043 / CIP 106854 / NCIMB 13768 / 1H11) protein is NADH-quinone oxidoreductase subunit A.